A 511-amino-acid polypeptide reads, in one-letter code: Bifunctional purine biosynthesis protein PurH (511 aa).

Residues 1–145 form the MGS-like domain; that stretch reads MKKRALVSVS…KNHKFVSVIV (145 aa).

It belongs to the PurH family.

The enzyme catalyses (6R)-10-formyltetrahydrofolate + 5-amino-1-(5-phospho-beta-D-ribosyl)imidazole-4-carboxamide = 5-formamido-1-(5-phospho-D-ribosyl)imidazole-4-carboxamide + (6S)-5,6,7,8-tetrahydrofolate. It catalyses the reaction IMP + H2O = 5-formamido-1-(5-phospho-D-ribosyl)imidazole-4-carboxamide. It functions in the pathway purine metabolism; IMP biosynthesis via de novo pathway; 5-formamido-1-(5-phospho-D-ribosyl)imidazole-4-carboxamide from 5-amino-1-(5-phospho-D-ribosyl)imidazole-4-carboxamide (10-formyl THF route): step 1/1. It participates in purine metabolism; IMP biosynthesis via de novo pathway; IMP from 5-formamido-1-(5-phospho-D-ribosyl)imidazole-4-carboxamide: step 1/1. The polypeptide is Bifunctional purine biosynthesis protein PurH (Bacillus thuringiensis subsp. konkukian (strain 97-27)).